A 132-amino-acid polypeptide reads, in one-letter code: Small ribosomal subunit protein uS8 (132 aa).

Belongs to the universal ribosomal protein uS8 family. As to quaternary structure, part of the 30S ribosomal subunit. Contacts proteins S5 and S12.

Functionally, one of the primary rRNA binding proteins, it binds directly to 16S rRNA central domain where it helps coordinate assembly of the platform of the 30S subunit. This chain is Small ribosomal subunit protein uS8, found in Clostridium botulinum (strain Alaska E43 / Type E3).